Consider the following 273-residue polypeptide: Dermonecrotic toxin LhSicTox-alphaIA2avi (273 aa).

Residue H5 is part of the active site. 2 residues coordinate Mg(2+): E25 and D27. H41 functions as the Nucleophile in the catalytic mechanism. 2 disulfide bridges follow: C45/C51 and C47/C190. Mg(2+) is bound at residue D85.

This sequence belongs to the arthropod phospholipase D family. Class II subfamily. Mg(2+) is required as a cofactor. As to expression, expressed by the venom gland.

The protein localises to the secreted. It catalyses the reaction an N-(acyl)-sphingosylphosphocholine = an N-(acyl)-sphingosyl-1,3-cyclic phosphate + choline. It carries out the reaction an N-(acyl)-sphingosylphosphoethanolamine = an N-(acyl)-sphingosyl-1,3-cyclic phosphate + ethanolamine. The enzyme catalyses a 1-acyl-sn-glycero-3-phosphocholine = a 1-acyl-sn-glycero-2,3-cyclic phosphate + choline. The catalysed reaction is a 1-acyl-sn-glycero-3-phosphoethanolamine = a 1-acyl-sn-glycero-2,3-cyclic phosphate + ethanolamine. In terms of biological role, dermonecrotic toxins cleave the phosphodiester linkage between the phosphate and headgroup of certain phospholipids (sphingolipid and lysolipid substrates), forming an alcohol (often choline) and a cyclic phosphate. This toxin acts on sphingomyelin (SM). It may also act on ceramide phosphoethanolamine (CPE), lysophosphatidylcholine (LPC) and lysophosphatidylethanolamine (LPE), but not on lysophosphatidylserine (LPS), and lysophosphatidylglycerol (LPG). It acts by transphosphatidylation, releasing exclusively cyclic phosphate products as second products. Induces dermonecrosis, hemolysis, increased vascular permeability, edema, inflammatory response, and platelet aggregation. This chain is Dermonecrotic toxin LhSicTox-alphaIA2avi, found in Loxosceles hirsuta (Recluse spider).